The following is a 340-amino-acid chain: Centromere protein N (340 aa).

2 positions are modified to phosphoserine: Ser227 and Ser236.

It belongs to the CENP-N/CHL4 family. In terms of assembly, component of the CENPA-NAC complex, at least composed of CENPA, CENPC, CENPH, CENPM, CENPN, CENPT and CENPU. The CENPA-NAC complex interacts with the CENPA-CAD complex, composed of CENPI, CENPK, CENPL, CENPO, CENPP, CENPQ, CENPR and CENPS. Interacts directly with CENPA. Identified in a centromere complex containing histones H2A, H2B and H4, and at least CENPA, CENPB, CENPC, CENPT, CENPN, HJURP, SUPT16H, SSRP1 and RSF1.

The protein resides in the nucleus. Its subcellular location is the chromosome. It localises to the centromere. It is found in the kinetochore. Component of the CENPA-NAC (nucleosome-associated) complex, a complex that plays a central role in assembly of kinetochore proteins, mitotic progression and chromosome segregation. The CENPA-NAC complex recruits the CENPA-CAD (nucleosome distal) complex and may be involved in incorporation of newly synthesized CENPA into centromeres. CENPN is the first protein to bind specifically to CENPA nucleosomes and the direct binding of CENPA nucleosomes by CENPN is required for centromere assembly. Required for chromosome congression and efficiently align the chromosomes on a metaphase plate. The chain is Centromere protein N (Cenpn) from Rattus norvegicus (Rat).